Reading from the N-terminus, the 164-residue chain is FMN reductase (NADH) RutF (164 aa).

This sequence belongs to the non-flavoprotein flavin reductase family. RutF subfamily.

The catalysed reaction is FMNH2 + NAD(+) = FMN + NADH + 2 H(+). In terms of biological role, catalyzes the reduction of FMN to FMNH2 which is used to reduce pyrimidine by RutA via the Rut pathway. This chain is FMN reductase (NADH) RutF, found in Escherichia coli O6:K15:H31 (strain 536 / UPEC).